Consider the following 941-residue polypeptide: Bifunctional glutamine synthetase adenylyltransferase/adenylyl-removing enzyme (941 aa).

The segment at 1–437 (MPMPTVSMSP…AAEFAELLAP (437 aa)) is adenylyl removase. The adenylyl transferase stretch occupies residues 444-941 (PDALADYWRA…FPLGKDETAL (498 aa)).

It belongs to the GlnE family. The cofactor is Mg(2+).

The enzyme catalyses [glutamine synthetase]-O(4)-(5'-adenylyl)-L-tyrosine + phosphate = [glutamine synthetase]-L-tyrosine + ADP. It catalyses the reaction [glutamine synthetase]-L-tyrosine + ATP = [glutamine synthetase]-O(4)-(5'-adenylyl)-L-tyrosine + diphosphate. Its function is as follows. Involved in the regulation of glutamine synthetase GlnA, a key enzyme in the process to assimilate ammonia. When cellular nitrogen levels are high, the C-terminal adenylyl transferase (AT) inactivates GlnA by covalent transfer of an adenylyl group from ATP to specific tyrosine residue of GlnA, thus reducing its activity. Conversely, when nitrogen levels are low, the N-terminal adenylyl removase (AR) activates GlnA by removing the adenylyl group by phosphorolysis, increasing its activity. The regulatory region of GlnE binds the signal transduction protein PII (GlnB) which indicates the nitrogen status of the cell. In Xanthomonas axonopodis pv. citri (strain 306), this protein is Bifunctional glutamine synthetase adenylyltransferase/adenylyl-removing enzyme.